A 581-amino-acid polypeptide reads, in one-letter code: Aspartate--tRNA ligase (581 aa).

An L-aspartate-binding site is contributed by Glu170. The segment at 194–197 (QLFK) is aspartate. Arg216 is an L-aspartate binding site. ATP-binding positions include 216–218 (RDE) and Gln225. His440 is an L-aspartate binding site. Position 469 (Glu469) interacts with ATP. Arg476 provides a ligand contact to L-aspartate. 521-524 (GFDR) is a binding site for ATP.

The protein belongs to the class-II aminoacyl-tRNA synthetase family. Type 1 subfamily. In terms of assembly, homodimer.

The protein resides in the cytoplasm. The catalysed reaction is tRNA(Asp) + L-aspartate + ATP = L-aspartyl-tRNA(Asp) + AMP + diphosphate. Its function is as follows. Catalyzes the attachment of L-aspartate to tRNA(Asp) in a two-step reaction: L-aspartate is first activated by ATP to form Asp-AMP and then transferred to the acceptor end of tRNA(Asp). The polypeptide is Aspartate--tRNA ligase (Thermosipho africanus (strain TCF52B)).